The chain runs to 267 residues: Thymidylate synthase (267 aa).

Arginine 24 lines the dUMP pocket. Histidine 54 lines the (6R)-5,10-methylene-5,6,7,8-tetrahydrofolate pocket. Position 129–130 (129–130 (RR)) interacts with dUMP. The active-site Nucleophile is cysteine 149. DUMP-binding positions include 169–172 (RSAD), asparagine 180, and 210–212 (HIY). Residue aspartate 172 participates in (6R)-5,10-methylene-5,6,7,8-tetrahydrofolate binding. Residue alanine 266 coordinates (6R)-5,10-methylene-5,6,7,8-tetrahydrofolate.

Belongs to the thymidylate synthase family. Bacterial-type ThyA subfamily. In terms of assembly, homodimer.

Its subcellular location is the cytoplasm. It catalyses the reaction dUMP + (6R)-5,10-methylene-5,6,7,8-tetrahydrofolate = 7,8-dihydrofolate + dTMP. The protein operates within pyrimidine metabolism; dTTP biosynthesis. Catalyzes the reductive methylation of 2'-deoxyuridine-5'-monophosphate (dUMP) to 2'-deoxythymidine-5'-monophosphate (dTMP) while utilizing 5,10-methylenetetrahydrofolate (mTHF) as the methyl donor and reductant in the reaction, yielding dihydrofolate (DHF) as a by-product. This enzymatic reaction provides an intracellular de novo source of dTMP, an essential precursor for DNA biosynthesis. The sequence is that of Thymidylate synthase from Arthrobacter sp. (strain FB24).